Consider the following 339-residue polypeptide: UDP-N-acetylenolpyruvoylglucosamine reductase (339 aa).

Residues 18–189 enclose the FAD-binding PCMH-type domain; it reads GVEVKAKWFA…LRVRFALNRV (172 aa). R166 is an active-site residue. The active-site Proton donor is the S239. Residue E335 is part of the active site.

Belongs to the MurB family. It depends on FAD as a cofactor.

It localises to the cytoplasm. It catalyses the reaction UDP-N-acetyl-alpha-D-muramate + NADP(+) = UDP-N-acetyl-3-O-(1-carboxyvinyl)-alpha-D-glucosamine + NADPH + H(+). It participates in cell wall biogenesis; peptidoglycan biosynthesis. Its function is as follows. Cell wall formation. The protein is UDP-N-acetylenolpyruvoylglucosamine reductase of Pseudomonas fluorescens (strain ATCC BAA-477 / NRRL B-23932 / Pf-5).